A 104-amino-acid polypeptide reads, in one-letter code: Putative arsenate reductase (104 aa).

The active site involves C12.

The protein belongs to the ArsC family.

It carries out the reaction [glutaredoxin]-dithiol + arsenate + glutathione + H(+) = glutathionyl-S-S-[glutaredoxin] + arsenite + H2O. Reduction of arsenate [As(V)] to arsenite [As(III)]. This protein expands the substrate specificity of ArsAB pump which can extrude arsenite and antimonite to allow for arsenate pumping and resistance. This is Putative arsenate reductase (yfjU) from Escherichia coli (strain K12).